The chain runs to 154 residues: Ribonuclease H (154 aa).

An RNase H type-1 domain is found at Met-1–Ser-142. Asp-10, Glu-48, Asp-70, and Asp-134 together coordinate Mg(2+). Basic and acidic residues predominate over residues Gly-126–Ala-147. The disordered stretch occupies residues Gly-126 to Pro-154.

This sequence belongs to the RNase H family. Monomer. Mg(2+) is required as a cofactor.

The protein localises to the cytoplasm. It catalyses the reaction Endonucleolytic cleavage to 5'-phosphomonoester.. Endonuclease that specifically degrades the RNA of RNA-DNA hybrids. This is Ribonuclease H from Aeromonas salmonicida (strain A449).